The primary structure comprises 508 residues: Photosystem II CP47 reaction center protein (508 aa).

Transmembrane regions (helical) follow at residues Ser21–Ser36, Ile101–Trp115, Gly140–Phe156, Ile203–Ser218, Val237–Val252, and Ser457–Arg472.

It belongs to the PsbB/PsbC family. PsbB subfamily. In terms of assembly, PSII is composed of 1 copy each of membrane proteins PsbA, PsbB, PsbC, PsbD, PsbE, PsbF, PsbH, PsbI, PsbJ, PsbK, PsbL, PsbM, PsbT, PsbX, PsbY, PsbZ, Psb30/Ycf12, at least 3 peripheral proteins of the oxygen-evolving complex and a large number of cofactors. It forms dimeric complexes. It depends on Binds multiple chlorophylls. PSII binds additional chlorophylls, carotenoids and specific lipids. as a cofactor.

The protein localises to the plastid. It is found in the chloroplast thylakoid membrane. In terms of biological role, one of the components of the core complex of photosystem II (PSII). It binds chlorophyll and helps catalyze the primary light-induced photochemical processes of PSII. PSII is a light-driven water:plastoquinone oxidoreductase, using light energy to abstract electrons from H(2)O, generating O(2) and a proton gradient subsequently used for ATP formation. This chain is Photosystem II CP47 reaction center protein, found in Fagopyrum esculentum subsp. ancestrale (Wild buckwheat).